The chain runs to 141 residues: Relaxin-3 (141 aa).

The first 24 residues, 1–24 (MAMLGLLLLASWALLGALGLQAEA), serve as a signal peptide directing secretion. Intrachain disulfides connect cysteine 34–cysteine 128, cysteine 46–cysteine 141, and cysteine 127–cysteine 132. A propeptide spans 54-117 (ADILAHESLG…GSPGVVRGSR (64 aa)) (connecting peptide).

This sequence belongs to the insulin family. In terms of assembly, heterodimer of a B chain and an A chain linked by two disulfide bonds. In terms of tissue distribution, high expression in the brain localized to the pons/medulla with highest levels in pars ventromedialis of the dorsal tegmental nucleus. Significant expression is also detected in the spleen, thymus, lung, testis and ovary.

Its subcellular location is the secreted. Its function is as follows. May play a role in neuropeptide signaling processes. Ligand for LGR7, relaxin-3 receptor-1 and relaxin-3 receptor-2. The protein is Relaxin-3 (Rln3) of Mus musculus (Mouse).